Here is a 183-residue protein sequence, read N- to C-terminus: MLKEIMNTAEDKMSKALLALKKDLASLKAGRANPAMLDKIEAEYYGTMTPLSQLANISVPEARILQIQPWDKSSLKAIEKAILVSDLGLNPNNDGTIIRLIIPELTEETRRNIVKTVKKYGEDTKIAIRSVRRDGNDKIKDLKSDMSEDDIKKAEEEIQKITDNYVKKVDEMIDIKEKEIMSI.

This sequence belongs to the RRF family.

The protein resides in the cytoplasm. Its function is as follows. Responsible for the release of ribosomes from messenger RNA at the termination of protein biosynthesis. May increase the efficiency of translation by recycling ribosomes from one round of translation to another. The chain is Ribosome-recycling factor from Clostridium tetani (strain Massachusetts / E88).